We begin with the raw amino-acid sequence, 560 residues long: Eukaryotic translation initiation factor 3 subunit D-1 (560 aa).

Residues 98–166 (VQKPPHQRGR…RGPPPKMRES (69 aa)) are disordered. Over residues 100 to 121 (KPPHQRGRFRNMRNSRSGRGRN) the composition is skewed to basic residues. At Thr-128 the chain carries Phosphothreonine. Over residues 147-156 (GRGMGKKFGH) the composition is skewed to basic residues. The RNA gate stretch occupies residues 291-305 (EFDLLTVNESSVEPP).

Belongs to the eIF-3 subunit D family. Component of the eukaryotic translation initiation factor 3 (eIF-3) complex. The eIF-3 complex interacts with pix.

It localises to the cytoplasm. Its function is as follows. mRNA cap-binding component of the eukaryotic translation initiation factor 3 (eIF-3) complex, which is involved in protein synthesis of a specialized repertoire of mRNAs and, together with other initiation factors, stimulates binding of mRNA and methionyl-tRNAi to the 40S ribosome. The eIF-3 complex specifically targets and initiates translation of a subset of mRNAs involved in cell proliferation. In the eIF-3 complex, eif3d specifically recognizes and binds the 7-methylguanosine cap of a subset of mRNAs. In Drosophila simulans (Fruit fly), this protein is Eukaryotic translation initiation factor 3 subunit D-1.